The sequence spans 433 residues: Glutamate-1-semialdehyde 2,1-aminomutase (433 aa).

Residue lysine 273 is modified to N6-(pyridoxal phosphate)lysine.

The protein belongs to the class-III pyridoxal-phosphate-dependent aminotransferase family. HemL subfamily. Homodimer. The cofactor is pyridoxal 5'-phosphate.

It localises to the cytoplasm. The enzyme catalyses (S)-4-amino-5-oxopentanoate = 5-aminolevulinate. The protein operates within porphyrin-containing compound metabolism; protoporphyrin-IX biosynthesis; 5-aminolevulinate from L-glutamyl-tRNA(Glu): step 2/2. Its pathway is porphyrin-containing compound metabolism; chlorophyll biosynthesis. In Synechocystis sp. (strain ATCC 27184 / PCC 6803 / Kazusa), this protein is Glutamate-1-semialdehyde 2,1-aminomutase (hemL).